The chain runs to 369 residues: Chaperone protein DnaJ (369 aa).

The J domain maps to D7–G73. The segment at G143 to K225 adopts a CR-type zinc-finger fold. Residues C156, C159, C173, C176, C199, C202, C213, and C216 each coordinate Zn(2+). CXXCXGXG motif repeat units follow at residues C156–G163, C173–G180, C199–G206, and C213–G220.

It belongs to the DnaJ family. In terms of assembly, homodimer. It depends on Zn(2+) as a cofactor.

It localises to the cytoplasm. Participates actively in the response to hyperosmotic and heat shock by preventing the aggregation of stress-denatured proteins and by disaggregating proteins, also in an autonomous, DnaK-independent fashion. Unfolded proteins bind initially to DnaJ; upon interaction with the DnaJ-bound protein, DnaK hydrolyzes its bound ATP, resulting in the formation of a stable complex. GrpE releases ADP from DnaK; ATP binding to DnaK triggers the release of the substrate protein, thus completing the reaction cycle. Several rounds of ATP-dependent interactions between DnaJ, DnaK and GrpE are required for fully efficient folding. Also involved, together with DnaK and GrpE, in the DNA replication of plasmids through activation of initiation proteins. This is Chaperone protein DnaJ from Thermotoga sp. (strain RQ2).